The primary structure comprises 234 residues: Small ribosomal subunit protein eS4 (234 aa).

The S4 RNA-binding domain maps to 43 to 106; it reads MPIAVWLRDY…NEYYRVLLDE (64 aa).

The protein belongs to the eukaryotic ribosomal protein eS4 family.

In Nanoarchaeum equitans (strain Kin4-M), this protein is Small ribosomal subunit protein eS4.